The chain runs to 275 residues: Testis-specific gene 13 protein (275 aa).

Residues 1 to 20 (MSQKRQTKFQNGKSKTSENS) show a composition bias toward polar residues. Residues 1-28 (MSQKRQTKFQNGKSKTSENSSAKREKGM) are disordered.

Testis-specific.

The polypeptide is Testis-specific gene 13 protein (TSGA13) (Homo sapiens (Human)).